Here is a 166-residue protein sequence, read N- to C-terminus: Disulfide bond formation protein B (166 aa).

The Cytoplasmic segment spans residues 1–11; it reads MQSFAFSTRAL. Residues 12–28 traverse the membrane as a helical segment; that stretch reads FLGLFAVCAGLLGFGLY. The Periplasmic segment spans residues 29 to 46; that stretch reads LQHAVGLEPCPMCIMQRY. A disulfide bridge links Cys38 with Cys41. Residues 47–63 traverse the membrane as a helical segment; it reads AFVAIALTALVAGLHGP. The Cytoplasmic segment spans residues 64–70; it reads GRRGTRA. Residues 71 to 87 form a helical membrane-spanning segment; it reads YAAVILLLALAGGGVAL. At 88 to 143 the chain is on the periplasmic side; sequence RQTWMQLYPPEFAECGPDLEFMLGSFPLADALPMIFQGAGDCSKVDWAFLGLSIAN. Cys102 and Cys129 are joined by a disulfide. A helical membrane pass occupies residues 144–162; it reads WSLVCLTLVAVFAIMMIAR. The Cytoplasmic segment spans residues 163 to 166; the sequence is KRGG.

It belongs to the DsbB family.

The protein resides in the cell inner membrane. Its function is as follows. Required for disulfide bond formation in some periplasmic proteins. Acts by oxidizing the DsbA protein. This chain is Disulfide bond formation protein B, found in Aromatoleum aromaticum (strain DSM 19018 / LMG 30748 / EbN1) (Azoarcus sp. (strain EbN1)).